We begin with the raw amino-acid sequence, 488 residues long: 3-octaprenyl-4-hydroxybenzoate carboxy-lyase (488 aa).

Residue Asn-172 coordinates Mn(2+). Prenylated FMN is bound by residues 175–177 (IYR), 189–191 (RWL), and 194–195 (RG). Residue Glu-238 participates in Mn(2+) binding. Asp-287 serves as the catalytic Proton donor.

This sequence belongs to the UbiD family. In terms of assembly, homohexamer. Prenylated FMN is required as a cofactor. It depends on Mn(2+) as a cofactor.

It is found in the cell membrane. The catalysed reaction is a 4-hydroxy-3-(all-trans-polyprenyl)benzoate + H(+) = a 2-(all-trans-polyprenyl)phenol + CO2. It functions in the pathway cofactor biosynthesis; ubiquinone biosynthesis. Its function is as follows. Catalyzes the decarboxylation of 3-octaprenyl-4-hydroxy benzoate to 2-octaprenylphenol, an intermediate step in ubiquinone biosynthesis. The protein is 3-octaprenyl-4-hydroxybenzoate carboxy-lyase of Shewanella oneidensis (strain ATCC 700550 / JCM 31522 / CIP 106686 / LMG 19005 / NCIMB 14063 / MR-1).